Reading from the N-terminus, the 964-residue chain is Probable LRR receptor-like serine/threonine-protein kinase IRK (964 aa).

The N-terminal stretch at 1-20 (MYKALIFTVLLVSAVAPVRS) is a signal peptide. The Extracellular segment spans residues 21-603 (LDPPLNDDVL…GHKRILLSIS (583 aa)). LRR repeat units lie at residues 92–116 (LQFLHKLSLSNNNLTGIINPNMLLS), 117–141 (LVNLKVVDLSSNGLSGSLPDEFFRQ), 143–166 (GSLRVLSLAKNKLTGKIPVSISSC), 168–190 (SLAALNLSSNGFSGSMPLGIWSL), 191–214 (NTLRSLDLSRNELEGEFPEKIDRL), 215–238 (NNLRALDLSRNRLSGPIPSEIGSC), 240–261 (LLKTIDLSENSLSGSLPNTFQQ), 263–286 (SLCYSLNLGKNALEGEVPKWIGEM), 287–310 (RSLETLDLSMNKFSGQVPDSIGNL), 312–334 (ALKVLNFSGNGLIGSLPVSTANC), and 335–358 (INLLALDLSGNSLTGKLPMWLFQD). The N-linked (GlcNAc...) asparagine glycan is linked to Asn104. The N-linked (GlcNAc...) asparagine glycan is linked to Asn173. An N-linked (GlcNAc...) asparagine glycan is attached at Asn317. Asn370 carries an N-linked (GlcNAc...) asparagine glycan. 7 LRR repeats span residues 375–399 (IKKIQVLDLSHNAFSGEIGAGLGDL), 400–423 (RDLEGLHLSRNSLTGPIPSTIGEL), 425–447 (HLSVLDVSHNQLNGMIPRETGGA), 448–471 (VSLEELRLENNLLEGNIPSSIKNC), 472–495 (SSLRSLILSHNKLLGSIPPELAKL), 496–519 (TRLEEVDLSFNELAGTLPKQLANL), and 521–544 (YLHTFNISHNHLFGELPAGGIFNG). Asn470 carries an N-linked (GlcNAc...) asparagine glycan. Asn526, Asn562, and Asn578 each carry an N-linked (GlcNAc...) asparagine glycan. A helical membrane pass occupies residues 604–624 (SLIAISAAAAIVVGVIAITVL). The Cytoplasmic portion of the chain corresponds to 625–964 (NLRVRASTVS…SGSSDELGSS (340 aa)). Positions 678 to 951 (LNKDCELGRG…GEAVNILRMI (274 aa)) constitute a Protein kinase domain. ATP contacts are provided by residues 684 to 692 (LGRGGFGAV) and Lys706.

This sequence belongs to the protein kinase superfamily. Ser/Thr protein kinase family. As to quaternary structure, interacts with IRKI. Autophosphorylated. Highly expressed in root tips, shoot apices and developing flowers.

The protein resides in the cell membrane. It carries out the reaction L-seryl-[protein] + ATP = O-phospho-L-seryl-[protein] + ADP + H(+). The enzyme catalyses L-threonyl-[protein] + ATP = O-phospho-L-threonyl-[protein] + ADP + H(+). This chain is Probable LRR receptor-like serine/threonine-protein kinase IRK, found in Arabidopsis thaliana (Mouse-ear cress).